Consider the following 188-residue polypeptide: Peptide deformylase (188 aa).

Residues C109 and H152 each contribute to the Fe cation site. E153 is a catalytic residue. H156 provides a ligand contact to Fe cation.

It belongs to the polypeptide deformylase family. The cofactor is Fe(2+).

It catalyses the reaction N-terminal N-formyl-L-methionyl-[peptide] + H2O = N-terminal L-methionyl-[peptide] + formate. Its function is as follows. Removes the formyl group from the N-terminal Met of newly synthesized proteins. Requires at least a dipeptide for an efficient rate of reaction. N-terminal L-methionine is a prerequisite for activity but the enzyme has broad specificity at other positions. This Chloroflexus aurantiacus (strain ATCC 29366 / DSM 635 / J-10-fl) protein is Peptide deformylase.